Consider the following 157-residue polypeptide: UPF0758 protein VC_0510 (157 aa).

The region spanning 36–157 (ALTNPDATKE…CTSFAERGWL (122 aa)) is the MPN domain. The Zn(2+) site is built by histidine 107, histidine 109, and aspartate 120. The JAMM motif signature appears at 107 to 120 (HNHPSGDSTPSQAD).

The protein belongs to the UPF0758 family.

In Vibrio cholerae serotype O1 (strain ATCC 39315 / El Tor Inaba N16961), this protein is UPF0758 protein VC_0510.